A 617-amino-acid polypeptide reads, in one-letter code: Chaperone protein HscA homolog (617 aa).

This sequence belongs to the heat shock protein 70 family.

Its function is as follows. Chaperone involved in the maturation of iron-sulfur cluster-containing proteins. Has a low intrinsic ATPase activity which is markedly stimulated by HscB. The chain is Chaperone protein HscA homolog from Actinobacillus pleuropneumoniae serotype 5b (strain L20).